The following is a 540-amino-acid chain: Putative F-box/LRR-repeat protein At5g41840 (540 aa).

Residues 13-61 (GDRISGLPDALICHILSFLPTKEAASTTVLAKRWKPLLAFVPNLNFDDS) form the F-box domain. 7 LRR repeats span residues 80-105 (FMSFVDSVLALQAKTKTPLKRFHVKC), 137-165 (RNYCENSSFYSLPSKIFVSKTLVRLKIQF), 189-214 (YFKIETSMLNKLLSGCHALEELVLAN), 217-242 (WADSSEDEACHVSVSIPTLKRLNFCR), 254-282 (YEDYDEENINEGVSLSFDNPNLVYLEYSD), 329-360 (ILYLSDDTLEVLSCCRERIPVFDNLLELTIKT), and 361-386 (TPYVGWKSLPPLLKSCPSLETLVFEG).

The protein is Putative F-box/LRR-repeat protein At5g41840 of Arabidopsis thaliana (Mouse-ear cress).